Consider the following 631-residue polypeptide: Dolichyl-diphosphooligosaccharide--protein glycosyltransferase subunit 2 (631 aa).

A signal peptide spans 1–22 (MASPGASTVFLLALTILAGTQA). The Lumenal segment spans residues 23 to 540 (LTPTHYLTKP…REPEKRPPTV (518 aa)). N-linked (GlcNAc...) asparagine glycosylation is present at Asn106. Lys154 is covalently cross-linked (Glycyl lysine isopeptide (Lys-Gly) (interchain with G-Cter in ubiquitin)). A helical transmembrane segment spans residues 541–561 (VSNTFTALILSPLLLLFALWI). The Cytoplasmic portion of the chain corresponds to 562–571 (RIGANVSNFT). A helical transmembrane segment spans residues 572-592 (FAPSTIIFHLGHAAMLGLMYV). At 593–596 (YWTQ) the chain is on the lumenal side. The chain crosses the membrane as a helical span at residues 597–617 (LNMFQTLKYLAILGSVTFLAG). The Cytoplasmic segment spans residues 618–631 (NRMLAQQAIKRTAH).

This sequence belongs to the SWP1 family. As to quaternary structure, component of the oligosaccharyltransferase (OST) complex. OST exists in two different complex forms which contain common core subunits RPN1, RPN2, OST48, OST4, DAD1 and TMEM258, either STT3A or STT3B as catalytic subunits, and form-specific accessory subunits. STT3A complex assembly occurs through the formation of 3 subcomplexes. Subcomplex 1 contains RPN1 and TMEM258, subcomplex 2 contains the STT3A-specific subunits STT3A, DC2/OSTC, and KCP2 as well as the core subunit OST4, and subcomplex 3 contains RPN2, DAD1, and OST48. The STT3A complex can form stable complexes with the Sec61 complex or with both the Sec61 and TRAP complexes. Interacts with DDI2. Interacts with TMEM35A/NACHO.

Its subcellular location is the endoplasmic reticulum. It is found in the endoplasmic reticulum membrane. The protein operates within protein modification; protein glycosylation. In terms of biological role, subunit of the oligosaccharyl transferase (OST) complex that catalyzes the initial transfer of a defined glycan (Glc(3)Man(9)GlcNAc(2) in eukaryotes) from the lipid carrier dolichol-pyrophosphate to an asparagine residue within an Asn-X-Ser/Thr consensus motif in nascent polypeptide chains, the first step in protein N-glycosylation. N-glycosylation occurs cotranslationally and the complex associates with the Sec61 complex at the channel-forming translocon complex that mediates protein translocation across the endoplasmic reticulum (ER). All subunits are required for a maximal enzyme activity. This is Dolichyl-diphosphooligosaccharide--protein glycosyltransferase subunit 2 from Canis lupus familiaris (Dog).